Reading from the N-terminus, the 299-residue chain is DNA-binding transcriptional repressor CapW (299 aa).

Residues 1 to 15 are compositionally biased toward basic and acidic residues; sequence MPDNFREGDKQDSQK. Residues 1–21 are disordered; that stretch reads MPDNFREGDKQDSQKGRQGAR. The winged HTH domain stretch occupies residues 1–95; it reads MPDNFREGDK…LFQPVYMTSS (95 aa). The tract at residues 96–207 is WYL domain; it reads LECYLNDLLQ…LSRIVQAQNA (112 aa). The WYL domain maps to 131–211; that stretch reads LRRLDTDVVS…VQAQNAGPDE (81 aa). A probable ligand-binding region region spans residues 156-200; that stretch reads YQSMSDPQGSKRTLTPHSLVHDGYRWHTRAWCHKRGEYRDFLLSR. A WCX domain region spans residues 208-299; sequence GPDEERANGD…KDEIYALLKQ (92 aa).

As to quaternary structure, homodimer.

Functionally, transcriptional regulator of a CBASS antivirus system. CBASS (cyclic oligonucleotide-based antiphage signaling system) provides immunity against bacteriophage. The CD-NTase protein synthesizes cyclic nucleotides in response to infection; these serve as specific second messenger signals. The signals activate a diverse range of effectors, leading to bacterial cell death and thus abortive phage infection. A type III CBASS system. Expression of this CBASS system (Cap18-Cap6-Cap7-CdnC-CapW-Cap17) in a susceptible E.coli (strain MG1655) confers resistance to bacteriophage P1. Binds specifically to and represses expression from the CBASS promoter, found between the genes for divergently transcribed capW and cdnC. The chain is DNA-binding transcriptional repressor CapW from Escherichia coli (strain KTE188).